The following is a 207-amino-acid chain: Putative 3-methyladenine DNA glycosylase (207 aa).

This sequence belongs to the DNA glycosylase MPG family.

This Listeria monocytogenes serovar 1/2a (strain ATCC BAA-679 / EGD-e) protein is Putative 3-methyladenine DNA glycosylase.